We begin with the raw amino-acid sequence, 72 residues long: Protein SlyX homolog (72 aa).

The interval Lys-53–Tyr-72 is disordered.

It belongs to the SlyX family.

The polypeptide is Protein SlyX homolog (Marinobacter nauticus (strain ATCC 700491 / DSM 11845 / VT8) (Marinobacter aquaeolei)).